Here is a 666-residue protein sequence, read N- to C-terminus: Calpain-10 (666 aa).

In terms of domain architecture, Calpain catalytic spans 13-321 (LFRDAAFPAS…FDEVTIGYPV (309 aa)). Active-site residues include Cys73, His238, and Asn263. Domain III stretches follow at residues 322–488 (TEAG…ISLS) and 507–648 (EWET…IHSQ).

Belongs to the peptidase C2 family.

Functionally, calcium-regulated non-lysosomal thiol-protease which catalyzes limited proteolysis of substrates involved in cytoskeletal remodeling and signal transduction. May play a role in insulin-stimulated glucose uptake. This is Calpain-10 (Capn10) from Mus musculus (Mouse).